Consider the following 497-residue polypeptide: Putative diacyglycerol O-acyltransferase Rv3480c (497 aa).

The active-site Proton acceptor is H143.

The protein belongs to the long-chain O-acyltransferase family.

It catalyses the reaction an acyl-CoA + a 1,2-diacyl-sn-glycerol = a triacyl-sn-glycerol + CoA. The catalysed reaction is di-(9Z)-octadecenoylglycerol + (9Z)-octadecenoyl-CoA = 1,2,3-tri-(9Z-octadecenoyl)-glycerol + CoA. It carries out the reaction hexadecan-1-ol + hexadecanoyl-CoA = hexadecanyl hexadecanoate + CoA. It participates in glycerolipid metabolism; triacylglycerol biosynthesis. In terms of biological role, upon expression in E.coli has a weak triacylglycerol synthase function, making triacylglycerol (TG) from diolein and long-chain fatty acyl-CoA. Also functions weakly as a wax synthase, as it incorporates palmityl alcohol into wax esters in the presence of palmitoyl-CoA. The protein is Putative diacyglycerol O-acyltransferase Rv3480c of Mycobacterium tuberculosis (strain ATCC 25618 / H37Rv).